Here is a 508-residue protein sequence, read N- to C-terminus: Phosphoenolpyruvate carboxylase (508 aa).

It belongs to the PEPCase type 2 family. In terms of assembly, homotetramer. Mg(2+) is required as a cofactor.

The enzyme catalyses oxaloacetate + phosphate = phosphoenolpyruvate + hydrogencarbonate. In terms of biological role, catalyzes the irreversible beta-carboxylation of phosphoenolpyruvate (PEP) to form oxaloacetate (OAA), a four-carbon dicarboxylic acid source for the tricarboxylic acid cycle. The sequence is that of Phosphoenolpyruvate carboxylase from Picrophilus torridus (strain ATCC 700027 / DSM 9790 / JCM 10055 / NBRC 100828 / KAW 2/3).